A 330-amino-acid chain; its full sequence is MAAAAMAGAADPPHLTEAKKLEYFSSINSMARKIMQEREKIKETYGSAWSQMSPVEQDTAIDNGMMDPRIRARYAMHRVDRDEVICYPKLLIQTGQKIVHFGEEDLTWQDEHSAPFSWETKSQMDFSISNMTELFVPPSVNEPKPKTSQTTKPPSNDESSFWKISAERSRLDNEKAEFPSLTPSQIKSLEKGEKPLPSYLRLESGSRDMEEVPVSRPAKQRAPKPPAPPPPPPVPISMTPAAISVTPTPPAPVPSLEEGWERAQSTLPSVSSTTDEVFSPGLVTRSSSQSNSTVKDVEKAEASPASSPTFSQFNTSSSILKTGFDFLDNW.

Disordered stretches follow at residues 136-160 (VPPS…DESS) and 172-314 (DNEK…SQFN). Over residues 223–235 (PKPPAPPPPPPVP) the composition is skewed to pro residues. A compositionally biased stretch (low complexity) spans 236–246 (ISMTPAAISVT). 3 stretches are compositionally biased toward polar residues: residues 263–276 (AQST…TTDE), 284–294 (TRSSSQSNSTV), and 304–314 (PASSPTFSQFN).

This is an uncharacterized protein from Danio rerio (Zebrafish).